The sequence spans 216 residues: Cyclin-U4-2 (216 aa).

This sequence belongs to the cyclin family. Cyclin U/P subfamily. As to quaternary structure, interacts with CDKA-1. Expressed in roots, stems and flowers. Expressed in the shoot apex, leaf primordia and young leaves.

This Arabidopsis thaliana (Mouse-ear cress) protein is Cyclin-U4-2 (CYCU4-2).